The following is a 338-amino-acid chain: tRNA-specific 2-thiouridylase MnmA (338 aa).

Residues 6 to 13 (AMSGGVDS) and Met-32 each bind ATP. Cys-92 acts as the Nucleophile in catalysis. Cysteines 92 and 186 form a disulfide. Gly-116 contributes to the ATP binding site. The interaction with tRNA stretch occupies residues 134–136 (KDQ). The active-site Cysteine persulfide intermediate is Cys-186. The tract at residues 288 to 289 (RY) is interaction with tRNA.

This sequence belongs to the MnmA/TRMU family.

It localises to the cytoplasm. The enzyme catalyses S-sulfanyl-L-cysteinyl-[protein] + uridine(34) in tRNA + AH2 + ATP = 2-thiouridine(34) in tRNA + L-cysteinyl-[protein] + A + AMP + diphosphate + H(+). Its function is as follows. Catalyzes the 2-thiolation of uridine at the wobble position (U34) of tRNA, leading to the formation of s(2)U34. This Campylobacter jejuni subsp. jejuni serotype O:6 (strain 81116 / NCTC 11828) protein is tRNA-specific 2-thiouridylase MnmA.